The chain runs to 233 residues: Small ribosomal subunit protein uS3 (233 aa).

The 69-residue stretch at 39-107 (VRQYLTKELA…PAQINIAEVR (69 aa)) folds into the KH type-2 domain.

It belongs to the universal ribosomal protein uS3 family. In terms of assembly, part of the 30S ribosomal subunit. Forms a tight complex with proteins S10 and S14.

Functionally, binds the lower part of the 30S subunit head. Binds mRNA in the 70S ribosome, positioning it for translation. The protein is Small ribosomal subunit protein uS3 of Citrobacter koseri (strain ATCC BAA-895 / CDC 4225-83 / SGSC4696).